The chain runs to 262 residues: Type III pantothenate kinase (262 aa).

6–13 (DVGNTNAV) is an ATP binding site. Residues Y100 and 107–110 (GADR) contribute to the substrate site. D109 acts as the Proton acceptor in catalysis. D129 contributes to the K(+) binding site. T132 lines the ATP pocket. A substrate-binding site is contributed by T184.

The protein belongs to the type III pantothenate kinase family. Homodimer. The cofactor is NH4(+). K(+) is required as a cofactor.

Its subcellular location is the cytoplasm. It catalyses the reaction (R)-pantothenate + ATP = (R)-4'-phosphopantothenate + ADP + H(+). It functions in the pathway cofactor biosynthesis; coenzyme A biosynthesis; CoA from (R)-pantothenate: step 1/5. Catalyzes the phosphorylation of pantothenate (Pan), the first step in CoA biosynthesis. The polypeptide is Type III pantothenate kinase (Bacillus cereus (strain B4264)).